A 191-amino-acid polypeptide reads, in one-letter code: Small ribosomal subunit protein uS5 (191 aa).

Residues 21-84 form the S5 DRBM domain; the sequence is FADRLVAINR…EQAKRQMIRV (64 aa). Residues 155–191 form a disordered region; the sequence is LRKESSPRSVAQRRGKKVADILPKVDAAPAPAETAEA. The span at 181–191 shows a compositional bias: low complexity; that stretch reads AAPAPAETAEA.

It belongs to the universal ribosomal protein uS5 family. Part of the 30S ribosomal subunit. Contacts proteins S4 and S8.

Functionally, with S4 and S12 plays an important role in translational accuracy. In terms of biological role, located at the back of the 30S subunit body where it stabilizes the conformation of the head with respect to the body. This Roseobacter denitrificans (strain ATCC 33942 / OCh 114) (Erythrobacter sp. (strain OCh 114)) protein is Small ribosomal subunit protein uS5.